Here is a 468-residue protein sequence, read N- to C-terminus: 6-phosphogluconate dehydrogenase, decarboxylating (468 aa).

NADP(+) contacts are provided by residues 10-15 (GMAVMG), 33-35 (NRT), 74-76 (VQS), and N102. Substrate contacts are provided by residues N102 and 128–130 (SGG). Residue K182 is the Proton acceptor of the active site. Residue 185 to 186 (HN) participates in substrate binding. The active-site Proton donor is the E189. Substrate-binding residues include Y190, K259, R286, R445, and H451.

The protein belongs to the 6-phosphogluconate dehydrogenase family. In terms of assembly, homodimer.

It carries out the reaction 6-phospho-D-gluconate + NADP(+) = D-ribulose 5-phosphate + CO2 + NADPH. The protein operates within carbohydrate degradation; pentose phosphate pathway; D-ribulose 5-phosphate from D-glucose 6-phosphate (oxidative stage): step 3/3. Catalyzes the oxidative decarboxylation of 6-phosphogluconate to ribulose 5-phosphate and CO(2), with concomitant reduction of NADP to NADPH. The chain is 6-phosphogluconate dehydrogenase, decarboxylating (gnd) from Buchnera aphidicola subsp. Acyrthosiphon pisum (strain APS) (Acyrthosiphon pisum symbiotic bacterium).